A 144-amino-acid chain; its full sequence is Large ribosomal subunit protein uL13 (144 aa).

The protein belongs to the universal ribosomal protein uL13 family. Part of the 50S ribosomal subunit.

Its function is as follows. This protein is one of the early assembly proteins of the 50S ribosomal subunit, although it is not seen to bind rRNA by itself. It is important during the early stages of 50S assembly. The polypeptide is Large ribosomal subunit protein uL13 (Magnetococcus marinus (strain ATCC BAA-1437 / JCM 17883 / MC-1)).